Reading from the N-terminus, the 285-residue chain is CCR4-NOT transcription complex subunit 7 (285 aa).

A divalent metal cation contacts are provided by D40, E42, D161, D230, and E278.

The protein belongs to the CAF1 family. In terms of assembly, component of the CCR4-NOT complex. The cofactor is Mn(2+). It depends on Mg(2+) as a cofactor. Requires Co(2+) as cofactor.

The protein resides in the nucleus. It is found in the cytoplasm. The enzyme catalyses Exonucleolytic cleavage of poly(A) to 5'-AMP.. In terms of biological role, has 3'-5' poly(A) exoribonuclease activity for synthetic poly(A) RNA substrate. Catalytic component of the CCR4-NOT complex which is one of the major cellular mRNA deadenylases and is linked to various cellular processes including bulk mRNA degradation, miRNA-mediated repression, translational repression during translational initiation and general transcription regulation. During miRNA-mediated repression the complex also seems to act as translational repressor during translational initiation. Additional complex functions may be a consequence of its influence on mRNA expression. This Xenopus laevis (African clawed frog) protein is CCR4-NOT transcription complex subunit 7 (cnot7).